The following is a 241-amino-acid chain: Ribonuclease PH (241 aa).

Residues R89 and 127–129 contribute to the phosphate site; that span reads GTR.

It belongs to the RNase PH family. As to quaternary structure, homohexameric ring arranged as a trimer of dimers.

The catalysed reaction is tRNA(n+1) + phosphate = tRNA(n) + a ribonucleoside 5'-diphosphate. In terms of biological role, phosphorolytic 3'-5' exoribonuclease that plays an important role in tRNA 3'-end maturation. Removes nucleotide residues following the 3'-CCA terminus of tRNAs; can also add nucleotides to the ends of RNA molecules by using nucleoside diphosphates as substrates, but this may not be physiologically important. Probably plays a role in initiation of 16S rRNA degradation (leading to ribosome degradation) during starvation. In Xylella fastidiosa (strain M23), this protein is Ribonuclease PH.